The following is a 354-amino-acid chain: Ubiquitin-conjugating enzyme E2 Z (354 aa).

Positions Met1–Ala21 are disordered. The 155-residue stretch at Gln99–Val253 folds into the UBC core domain. Catalysis depends on Cys188, which acts as the Glycyl thioester intermediate. The segment at Asn332 to Val354 is disordered. Phosphoserine is present on Ser337.

It belongs to the ubiquitin-conjugating enzyme family. In terms of tissue distribution, widely expressed. Highly in placenta, pancreas, spleen and testis.

It is found in the cytoplasm. The protein localises to the nucleus. The catalysed reaction is S-ubiquitinyl-[E1 ubiquitin-activating enzyme]-L-cysteine + [E2 ubiquitin-conjugating enzyme]-L-cysteine = [E1 ubiquitin-activating enzyme]-L-cysteine + S-ubiquitinyl-[E2 ubiquitin-conjugating enzyme]-L-cysteine.. It functions in the pathway protein modification; protein ubiquitination. Its function is as follows. Catalyzes the covalent attachment of ubiquitin to other proteins. Specific substrate for UBA6, not charged with ubiquitin by UBE1. May be involved in apoptosis regulation. In Homo sapiens (Human), this protein is Ubiquitin-conjugating enzyme E2 Z (UBE2Z).